The following is a 494-amino-acid chain: Argininosuccinate synthase, chloroplastic (494 aa).

Residues 1 to 73 (MAEISATSFP…SRSCKNQAIR (73 aa)) constitute a chloroplast transit peptide. N-acetylalanine is present on Ala-74. Residues 102–110 (AYSGGLDTS) and Ala-129 each bind ATP. Tyr-181 and Ser-186 together coordinate L-citrulline. Gly-211 is a binding site for ATP. Positions 213, 217, and 218 each coordinate L-aspartate. Asn-217 serves as a coordination point for L-citrulline. Residues Arg-221, Ser-270, Ser-279, Glu-355, and Tyr-367 each coordinate L-citrulline.

It belongs to the argininosuccinate synthase family. Type 1 subfamily. As to quaternary structure, homotetramer.

It localises to the plastid. It is found in the chloroplast. The enzyme catalyses L-citrulline + L-aspartate + ATP = 2-(N(omega)-L-arginino)succinate + AMP + diphosphate + H(+). It functions in the pathway amino-acid biosynthesis; L-arginine biosynthesis; L-arginine from L-ornithine and carbamoyl phosphate: step 2/3. This chain is Argininosuccinate synthase, chloroplastic, found in Arabidopsis thaliana (Mouse-ear cress).